The chain runs to 467 residues: Acetyl-CoA decarbonylase/synthase complex subunit beta (467 aa).

[Ni-Fe-S] cluster-binding residues include C193, C196, C282, and C284. Residues 403-428 (RWAEEEEEEEEKAPEEEAPAEEPTME) form a disordered region. Residues 405-426 (AEEEEEEEEKAPEEEAPAEEPT) are compositionally biased toward acidic residues.

It belongs to the CdhC family. In terms of assembly, monomer. The ACDS complex is made up of alpha, epsilon, beta, gamma and delta chains with a probable stoichiometry of (alpha(2)epsilon(2))(4)-beta(8)-(gamma(1)delta(1))(8). [Ni-Fe-S] cluster is required as a cofactor.

It carries out the reaction Co(I)-[corrinoid Fe-S protein] + acetyl-CoA + H(+) = methyl-Co(III)-[corrinoid Fe-S protein] + CO + CoA. In terms of biological role, part of a complex that catalyzes the reversible cleavage of acetyl-CoA, allowing autotrophic growth from CO(2). The alpha-epsilon complex generates CO from CO(2), while the beta subunit (this protein) combines the CO with CoA and a methyl group to form acetyl-CoA. The methyl group, which is incorporated into acetyl-CoA, is transferred to the beta subunit by a corrinoid iron-sulfur protein (the gamma-delta complex). The sequence is that of Acetyl-CoA decarbonylase/synthase complex subunit beta from Methanopyrus kandleri (strain AV19 / DSM 6324 / JCM 9639 / NBRC 100938).